Reading from the N-terminus, the 551-residue chain is RCC1 and BTB domain-containing protein 2 (551 aa).

RCC1 repeat units lie at residues 64-115 (NDEI…VLAT), 117-169 (DGEV…VLTS), 171-222 (GEVF…AVVD), 223-274 (TGEV…VLTD), 276-326 (GQIY…AAKS), and 328-382 (GGHV…TVAE). Positions 394–457 (ADLKFLVDGK…LYTDNISLPP (64 aa)) constitute a BTB domain.

It localises to the cytoplasmic vesicle. It is found in the secretory vesicle. Its subcellular location is the acrosome. In Rattus norvegicus (Rat), this protein is RCC1 and BTB domain-containing protein 2 (Rcbtb2).